The chain runs to 412 residues: 4-hydroxyphenylpyruvate dioxygenase (412 aa).

2 VOC domains span residues 31 to 179 (GYDH…LISR) and 209 to 369 (RIDH…LFTK). Fe cation contacts are provided by H212, H295, and E380.

This sequence belongs to the 4HPPD family. The cofactor is Fe cation.

It carries out the reaction 3-(4-hydroxyphenyl)pyruvate + O2 = homogentisate + CO2. It functions in the pathway amino-acid degradation; L-phenylalanine degradation; acetoacetate and fumarate from L-phenylalanine: step 3/6. The sequence is that of 4-hydroxyphenylpyruvate dioxygenase from Neurospora crassa (strain ATCC 24698 / 74-OR23-1A / CBS 708.71 / DSM 1257 / FGSC 987).